Here is a 130-residue protein sequence, read N- to C-terminus: Small ribosomal subunit protein uS11 (130 aa).

The segment at 109–130 is disordered; the sequence is EDITPIPHDGTGRPGGKRGRRV.

This sequence belongs to the universal ribosomal protein uS11 family. As to quaternary structure, part of the 30S ribosomal subunit.

In terms of biological role, located on the platform of the 30S subunit. The chain is Small ribosomal subunit protein uS11 from Methanobrevibacter smithii (strain ATCC 35061 / DSM 861 / OCM 144 / PS).